The following is a 153-amino-acid chain: ATP synthase subunit b' (153 aa).

A helical transmembrane segment spans residues 20–40 (TLPLMAVQVVLLTFILNALFF).

This sequence belongs to the ATPase B chain family. As to quaternary structure, F-type ATPases have 2 components, F(1) - the catalytic core - and F(0) - the membrane proton channel. F(1) has five subunits: alpha(3), beta(3), gamma(1), delta(1), epsilon(1). F(0) has four main subunits: a(1), b(1), b'(1) and c(10-14). The alpha and beta chains form an alternating ring which encloses part of the gamma chain. F(1) is attached to F(0) by a central stalk formed by the gamma and epsilon chains, while a peripheral stalk is formed by the delta, b and b' chains.

Its subcellular location is the cellular thylakoid membrane. In terms of biological role, f(1)F(0) ATP synthase produces ATP from ADP in the presence of a proton or sodium gradient. F-type ATPases consist of two structural domains, F(1) containing the extramembraneous catalytic core and F(0) containing the membrane proton channel, linked together by a central stalk and a peripheral stalk. During catalysis, ATP synthesis in the catalytic domain of F(1) is coupled via a rotary mechanism of the central stalk subunits to proton translocation. Functionally, component of the F(0) channel, it forms part of the peripheral stalk, linking F(1) to F(0). The b'-subunit is a diverged and duplicated form of b found in plants and photosynthetic bacteria. The protein is ATP synthase subunit b' of Prochlorococcus marinus (strain NATL2A).